The chain runs to 1131 residues: Plasma membrane ATPase (1131 aa).

A run of 6 helical transmembrane segments spans residues 77–97, 98–118, 151–171, 231–251, 265–285, and 305–325; these read PVLV…EAAA, IISI…LLLI, GAIV…LIRL, AVVY…LISG, MSAI…AVQF, and MLVV…SVTL. The 4-aspartylphosphate intermediate role is filled by Asp-357. Mg(2+) is bound by residues Asp-615 and Asp-619. Helical transmembrane passes span 642–662, 689–709, 733–753, 884–904, and 946–966; these read AADI…VIGA, LITV…MAVF, ITNI…STWA, LAFF…LGGF, and VIGC…WYVL. The span at 994-1010 shows a compositional bias: basic and acidic residues; it reads KRSLDRRSKDDIGDKEF. 2 disordered regions span residues 994-1023 and 1067-1131; these read KRSL…NYSN and RRSM…TIRE. Over residues 1089 to 1100 the composition is skewed to polar residues; that stretch reads SRTSNTLSTGSK. The segment covering 1118-1131 has biased composition (basic and acidic residues); it reads IKPDKYDFASTIRE.

Belongs to the cation transport ATPase (P-type) (TC 3.A.3) family. Type IIIA subfamily.

Its subcellular location is the cell membrane. The catalysed reaction is ATP + H2O + H(+)(in) = ADP + phosphate + 2 H(+)(out). The plasma membrane ATPase of plants and fungi is a hydrogen ion pump. The proton gradient it generates drives the active transport of nutrients by H(+)-symport. The resulting external acidification and/or internal alkinization may mediate growth responses. This is Plasma membrane ATPase (PMA1) from Dunaliella bioculata (Green alga).